The sequence spans 268 residues: AN1-type zinc finger protein 1 (268 aa).

N-acetylalanine is present on Ala-2. AN1-type zinc fingers lie at residues 4–52 and 58–106; these read LDIG…VVKE and EHKS…VAKP. Residues Cys-10, Cys-15, Cys-25, Cys-28, Cys-33, His-36, His-42, Cys-44, Cys-64, Cys-69, Cys-79, Cys-82, Cys-87, His-90, His-96, and Cys-98 each contribute to the Zn(2+) site. The tract at residues 160 to 260 is ubiquitin-like; sequence QTERTYFQVY…EYLNDEEQFL (101 aa).

As to quaternary structure, associates with the 26S proteasome; this association occurs upon exposure to arsenite and is reduced in the presence of ATP. Interacts (via AN1-type 1 and 2 zinc fingers) with PSMD1; this interaction is increased upon arsenite treatment and occurs in an ATP-independent manner. Interacts with PSMC4. Interacts with PSMA1. Interacts (via its ubiquitin-like region) with VCP; this interaction occurs in an arsenite-dependent manner and is necessary for the recruitment of the ubiquitin-selective ATPase VCP to stress granules (SGs).

It localises to the cytoplasm. The protein resides in the stress granule. In terms of biological role, plays a role in the regulation of cytoplasmic stress granules (SGs) turnover. SGs are dynamic and transient cytoplasmic ribonucleoprotein assemblies important for cellular protein homeostasis when protein production is suspended after acute exogenous stress. Associates with SGs and is involved in the efficient and specific arsenite-induced clearance process of SGs through the recruitment of the ubiquitin-selective ATPase VCP and the 26S proteasome. This process requires both complexes for efficient degradation of damaged ubiquitinated SG proteins during recovery from arsenite stress, and hence avoiding aberrant cytoplasmic SGs degradation via autophagy. This Mus musculus (Mouse) protein is AN1-type zinc finger protein 1.